The following is a 339-amino-acid chain: D-erythrose-4-phosphate dehydrogenase (339 aa).

NAD(+) is bound by residues 12-13 (RI) and R81. Residues 154–156 (SCT), R200, 213–214 (TK), and R236 each bind substrate. The active-site Nucleophile is the C155. An NAD(+)-binding site is contributed by N318.

It belongs to the glyceraldehyde-3-phosphate dehydrogenase family. Epd subfamily. In terms of assembly, homotetramer.

The protein localises to the cytoplasm. It carries out the reaction D-erythrose 4-phosphate + NAD(+) + H2O = 4-phospho-D-erythronate + NADH + 2 H(+). The protein operates within cofactor biosynthesis; pyridoxine 5'-phosphate biosynthesis; pyridoxine 5'-phosphate from D-erythrose 4-phosphate: step 1/5. Catalyzes the NAD-dependent conversion of D-erythrose 4-phosphate to 4-phosphoerythronate. This is D-erythrose-4-phosphate dehydrogenase from Escherichia fergusonii (strain ATCC 35469 / DSM 13698 / CCUG 18766 / IAM 14443 / JCM 21226 / LMG 7866 / NBRC 102419 / NCTC 12128 / CDC 0568-73).